The chain runs to 209 residues: SelT-like protein (209 aa).

An N-terminal signal peptide occupies residues 1-22 (MDKTQLILLGLPIFLLCSDLFN). C64 and C67 form a disulfide bridge.

Belongs to the SelWTH family. SELT subfamily.

This is SelT-like protein from Arabidopsis thaliana (Mouse-ear cress).